We begin with the raw amino-acid sequence, 886 residues long: Isoleucine--tRNA ligase (886 aa).

A 'HIGH' region motif is present at residues 60-70; sequence PYANGDIHIGH. E546 is an L-isoleucyl-5'-AMP binding site. Positions 587 to 591 match the 'KMSKS' region motif; that stretch reads KMSKS. K590 contributes to the ATP binding site. 4 residues coordinate Zn(2+): C856, C859, C870, and C873.

This sequence belongs to the class-I aminoacyl-tRNA synthetase family. IleS type 1 subfamily. Monomer. Zn(2+) is required as a cofactor.

It localises to the cytoplasm. It carries out the reaction tRNA(Ile) + L-isoleucine + ATP = L-isoleucyl-tRNA(Ile) + AMP + diphosphate. In terms of biological role, catalyzes the attachment of isoleucine to tRNA(Ile). As IleRS can inadvertently accommodate and process structurally similar amino acids such as valine, to avoid such errors it has two additional distinct tRNA(Ile)-dependent editing activities. One activity is designated as 'pretransfer' editing and involves the hydrolysis of activated Val-AMP. The other activity is designated 'posttransfer' editing and involves deacylation of mischarged Val-tRNA(Ile). The protein is Isoleucine--tRNA ligase of Mesomycoplasma hyopneumoniae (strain 232) (Mycoplasma hyopneumoniae).